A 284-amino-acid polypeptide reads, in one-letter code: L-ribulose-5-phosphate 3-epimerase UlaE (284 aa).

This sequence belongs to the L-ribulose-5-phosphate 3-epimerase family.

The enzyme catalyses L-ribulose 5-phosphate = L-xylulose 5-phosphate. The protein operates within cofactor degradation; L-ascorbate degradation; D-xylulose 5-phosphate from L-ascorbate: step 3/4. Functionally, catalyzes the isomerization of L-xylulose-5-phosphate to L-ribulose-5-phosphate. Is involved in the anaerobic L-ascorbate utilization. The sequence is that of L-ribulose-5-phosphate 3-epimerase UlaE from Escherichia coli (strain ATCC 8739 / DSM 1576 / NBRC 3972 / NCIMB 8545 / WDCM 00012 / Crooks).